The primary structure comprises 342 residues: Phomopsin biosynthesis cluster protein B (342 aa).

The disordered stretch occupies residues 1–22; it reads MESIAKAKSLPNKGRTYDSQRP. The helical transmembrane segment at 87–107 threads the bilayer; sequence VLIIGCAVISLFAIIGALGFA. Residues 118–186 are disordered; that stretch reads CASPAHQNPH…QCGESPDEAQ (69 aa). The segment covering 144-155 has biased composition (low complexity); the sequence is HSGSHSSSSSTN. Residue Asn248 is glycosylated (N-linked (GlcNAc...) asparagine).

It localises to the membrane. Functionally, part of the gene cluster that mediates the biosynthesis of the phomopsins, a group of hexapeptide mycotoxins which infects lupins and causes lupinosis disease in livestock. The role of phomB within the phomopsins biosynthesis pathway has still to be determined. The pathway starts with the processing of the precursor phomA by several endopeptidases including kexin proteases as well as the cluster-specific S41 family peptidase phomP1 and the oligopeptidase phomG to produce 10 identical copies of the hexapeptide Tyr-Val-Ile-Pro-Ile-Asp. After being excised from the precursor peptide, the core peptides are cyclized and modified post-translationally by enzymes encoded within the gene cluster. The timing and order of proteolysis of the phomA precursor and PTMs are still unknown. Two tyrosinase-like enzymes, phomQ1 and phomQ2, catalyze the chlorination and hydroxylation of Tyr, respectively. PhomYb, is proposed to be involved in the construction of the macrocyclic structure. The other 4 ustYa family proteins may be involved in PTMs that generate the unique structure of phomopsin A. PhomYa is required for the hydroxylation of C-beta of Tyr. PhomYc, phomYd, and phomYe are responsible for the biosynthesis of 2,3-dehydroisoleucine (dIle), 2,3-dehydroaspartic acid (dAsp), and 3,4-dehydroproline (dPro), respectively. While dIle formation by phomYc is indispensable for the installation of dAsp by phomYd, the order of the other PTMs have not been elucidated yet. Most of the biosynthetic enzymes likely have broad substrate specificity, and thus, there might be a metabolic grid from a precursor to phomopsin A. The enzyme(s) responsible for the biosynthesis of 3,4-dehydrovaline (dVal) have also not been identified yet. Finally, phomM acts as an S-adenosylmethionine-dependent alpha-N-methyltransferase that catalyzes two successive N-methylation reactions, converting N-desmethyl-phomopsin A to phomopsin A and phomopsin A further to an N,N-dimethylated congener called phomopsin E. The protein is Phomopsin biosynthesis cluster protein B of Diaporthe leptostromiformis (Lupinosis disease fungus).